The sequence spans 79 residues: uncharacterized protein (79 aa).

Residues 1–19 (MKYVALAFVLSLVILQISA) form the signal peptide.

Nacreous layer of shell (at protein level). Expressed primarily in the mantle with highest level in the mantle pallium and lower level in the mantle edge.

It is found in the secreted. This is an uncharacterized protein from Pinctada maxima (Silver-lipped pearl oyster).